A 341-amino-acid polypeptide reads, in one-letter code: Annexin A1 isoform p35 (341 aa).

4 Annexin repeats span residues 37–108 (FDPS…ALLK), 109–180 (TPAQ…SLAK), 192–263 (ELAE…ALVK), and 267–338 (SKPA…ALCG).

This sequence belongs to the annexin family. In terms of processing, in contrast to mammalian homologs, does not contain a tyrosine phosphorylation site in the N-terminal part.

It localises to the nucleus. It is found in the cytoplasm. The protein localises to the cell projection. Its subcellular location is the cilium. The protein resides in the basolateral cell membrane. Calcium/phospholipid-binding protein which promotes membrane fusion and is involved in exocytosis. This protein regulates phospholipase A2 activity. It seems to bind from two to four calcium ions with high affinity. In Columba livia (Rock dove), this protein is Annexin A1 isoform p35 (CP35).